Reading from the N-terminus, the 194-residue chain is CASP-like protein 1B1 (194 aa).

Over 1–24 (MASENGDKLELAFSAVPDPKPKKD) the chain is Cytoplasmic. The chain crosses the membrane as a helical span at residues 25-45 (WVILSLRVVAFFATASATLVM). The Extracellular segment spans residues 46-77 (AFNKQTKGMVVATIGTNPVTITLTAMFQHTPA). A helical membrane pass occupies residues 78-98 (FIFFVIVNAIASFYNLLVIGV). The Cytoplasmic segment spans residues 99–111 (EILGPQYDYKGLR). A helical membrane pass occupies residues 112-132 (LGLIAILDVMTMALAATGDGA). At 133–164 (ATFMAELGRNGNSHARWDKICDKFEAYCNRGG) the chain is on the extracellular side. A helical membrane pass occupies residues 165–185 (VALVASFVGLILLLVVTVMSI). At 186-194 (TKLLKLNRI) the chain is on the cytoplasmic side.

It belongs to the Casparian strip membrane proteins (CASP) family. Homodimer and heterodimers.

It localises to the cell membrane. In Glycine max (Soybean), this protein is CASP-like protein 1B1.